We begin with the raw amino-acid sequence, 288 residues long: Octanoyl-[GcvH]:protein N-octanoyltransferase (288 aa).

Residues 44–253 (AGGPPTFRLW…VLESAMGPQV (210 aa)) form the BPL/LPL catalytic domain. Cys148 (acyl-thioester intermediate) is an active-site residue. Residues 269–288 (GREGASETDPRRVAYGVDRP) form a disordered region. The span at 272–288 (GASETDPRRVAYGVDRP) shows a compositional bias: basic and acidic residues.

This sequence belongs to the octanoyltransferase LipL family.

The enzyme catalyses N(6)-octanoyl-L-lysyl-[glycine-cleavage complex H protein] + L-lysyl-[lipoyl-carrier protein] = N(6)-octanoyl-L-lysyl-[lipoyl-carrier protein] + L-lysyl-[glycine-cleavage complex H protein]. It functions in the pathway protein modification; protein lipoylation via endogenous pathway; protein N(6)-(lipoyl)lysine from octanoyl-[acyl-carrier-protein]. Its function is as follows. Catalyzes the amidotransfer (transamidation) of the octanoyl moiety from octanoyl-GcvH to the lipoyl domain of the E2 subunit of lipoate-dependent enzymes. This is Octanoyl-[GcvH]:protein N-octanoyltransferase from Kyrpidia tusciae (strain DSM 2912 / NBRC 15312 / T2) (Bacillus tusciae).